Consider the following 256-residue polypeptide: DNA repair protein RecO (256 aa).

It belongs to the RecO family.

Its function is as follows. Involved in DNA repair and RecF pathway recombination. The protein is DNA repair protein RecO of Pelotomaculum thermopropionicum (strain DSM 13744 / JCM 10971 / SI).